A 372-amino-acid polypeptide reads, in one-letter code: Alanine racemase (372 aa).

The active-site Proton acceptor; specific for D-alanine is lysine 33. Position 33 is an N6-(pyridoxal phosphate)lysine (lysine 33). Position 131 (arginine 131) interacts with substrate. Tyrosine 261 serves as the catalytic Proton acceptor; specific for L-alanine. Methionine 309 lines the substrate pocket.

This sequence belongs to the alanine racemase family. Pyridoxal 5'-phosphate is required as a cofactor.

It carries out the reaction L-alanine = D-alanine. The protein operates within amino-acid biosynthesis; D-alanine biosynthesis; D-alanine from L-alanine: step 1/1. Functionally, catalyzes the interconversion of L-alanine and D-alanine. May also act on other amino acids. In Salinispora tropica (strain ATCC BAA-916 / DSM 44818 / JCM 13857 / NBRC 105044 / CNB-440), this protein is Alanine racemase (alr).